We begin with the raw amino-acid sequence, 55 residues long: Small ribosomal subunit protein eS31 (55 aa).

Cys-26, Cys-29, Cys-44, and Cys-47 together coordinate Zn(2+).

Belongs to the eukaryotic ribosomal protein eS31 family. In terms of assembly, part of the 30S ribosomal subunit. Zn(2+) serves as cofactor.

The sequence is that of Small ribosomal subunit protein eS31 from Archaeoglobus fulgidus (strain ATCC 49558 / DSM 4304 / JCM 9628 / NBRC 100126 / VC-16).